Reading from the N-terminus, the 1379-residue chain is DNA-directed RNA polymerase subunit beta'' (1379 aa).

Residues C220, C293, C300, and C303 each contribute to the Zn(2+) site.

It belongs to the RNA polymerase beta' chain family. RpoC2 subfamily. As to quaternary structure, in plastids the minimal PEP RNA polymerase catalytic core is composed of four subunits: alpha, beta, beta', and beta''. When a (nuclear-encoded) sigma factor is associated with the core the holoenzyme is formed, which can initiate transcription. Requires Zn(2+) as cofactor.

The protein localises to the plastid. It localises to the chloroplast. The enzyme catalyses RNA(n) + a ribonucleoside 5'-triphosphate = RNA(n+1) + diphosphate. DNA-dependent RNA polymerase catalyzes the transcription of DNA into RNA using the four ribonucleoside triphosphates as substrates. This is DNA-directed RNA polymerase subunit beta'' from Barbarea verna (Land cress).